A 147-amino-acid polypeptide reads, in one-letter code: Large ribosomal subunit protein uL15 (147 aa).

The segment covering methionine 1–arginine 20 has biased composition (basic and acidic residues). Positions methionine 1–glutamine 61 are disordered. Positions arginine 23–alanine 33 are enriched in gly residues. The span at glycine 34–glycine 47 shows a compositional bias: basic residues.

The protein belongs to the universal ribosomal protein uL15 family. Part of the 50S ribosomal subunit.

Binds to the 23S rRNA. The sequence is that of Large ribosomal subunit protein uL15 from Xanthomonas euvesicatoria pv. vesicatoria (strain 85-10) (Xanthomonas campestris pv. vesicatoria).